The primary structure comprises 85 residues: Coiled-coil-helix-coiled-coil-helix domain-containing protein 7 (85 aa).

The CHCH domain maps to 13–55; that stretch reads INPCLSESDASTRCLDENNYDKERCSTYFLKYKNCRKFWHSIM. Short sequence motifs (cx9C motif) lie at residues 16 to 26 and 37 to 47; these read CLSESDASTRC and CSTYFLKYKNC. 2 disulfide bridges follow: C16–C47 and C26–C37.

The protein belongs to the CHCHD7 family. In terms of assembly, monomer.

The protein resides in the mitochondrion intermembrane space. The sequence is that of Coiled-coil-helix-coiled-coil-helix domain-containing protein 7 (CHCHD7) from Macaca fascicularis (Crab-eating macaque).